The chain runs to 132 residues: Protein C10 (132 aa).

N-acetylalanine is present on alanine 2.

It belongs to the UPF0456 family.

It localises to the cytoplasm. Functionally, in brain, may be required for corpus callosum development. This Bos taurus (Bovine) protein is Protein C10.